Reading from the N-terminus, the 227-residue chain is NAD(P)H-hydrate epimerase (227 aa).

In terms of domain architecture, YjeF N-terminal spans 12 to 221 (SRLVDELAIA…DIGVPRALLE (210 aa)). A (6S)-NADPHX-binding site is contributed by 59–63 (NNGGD). Asparagine 60 and aspartate 131 together coordinate K(+). (6S)-NADPHX-binding positions include 135 to 141 (GTGATGE) and aspartate 164. K(+) is bound at residue threonine 167.

This sequence belongs to the NnrE/AIBP family. It depends on K(+) as a cofactor.

It catalyses the reaction (6R)-NADHX = (6S)-NADHX. It carries out the reaction (6R)-NADPHX = (6S)-NADPHX. Its function is as follows. Catalyzes the epimerization of the S- and R-forms of NAD(P)HX, a damaged form of NAD(P)H that is a result of enzymatic or heat-dependent hydration. This is a prerequisite for the S-specific NAD(P)H-hydrate dehydratase to allow the repair of both epimers of NAD(P)HX. The sequence is that of NAD(P)H-hydrate epimerase from Pirellula staleyi (strain ATCC 27377 / DSM 6068 / ICPB 4128) (Pirella staleyi).